The following is a 181-amino-acid chain: Regulator of G-protein signaling 10 (181 aa).

The disordered stretch occupies residues 1 to 35 (MFTRAVSRLSRKRPPSDIHDGDGSSSSGHQSLKST). Residues Ser24 and Ser41 each carry the phosphoserine modification. The 116-residue stretch at 41–156 (SLENLLEDPE…LKSDLFLKPK (116 aa)) folds into the RGS domain. The S-palmitoyl cysteine moiety is linked to residue Cys74. The segment at 155–181 (PKRTEEEEEEPPDAQTAAKRASRIYNT) is disordered. The residue at position 176 (Ser176) is a Phosphoserine.

As to quaternary structure, interacts with GNAZ, GNAI1 and GNAI3. Associates specifically with the activated, GTP-bound forms of GNAZ and GNAI3.

The protein localises to the cytoplasm. It localises to the cytosol. It is found in the nucleus. In terms of biological role, regulates G protein-coupled receptor signaling cascades, including signaling downstream of the muscarinic acetylcholine receptor CHRM2. Inhibits signal transduction by increasing the GTPase activity of G protein alpha subunits, thereby driving them into their inactive GDP-bound form. Modulates the activity of potassium channels that are activated in response to CHRM2 signaling. Activity on GNAZ is inhibited by palmitoylation of the G-protein. The polypeptide is Regulator of G-protein signaling 10 (Rgs10) (Mus musculus (Mouse)).